Reading from the N-terminus, the 280-residue chain is Chlorophyll a-b binding protein CP29 (280 aa).

A disordered region spans residues M1–V42. V2 is subject to N-acetylvaline. Residue T7 is modified to Phosphothreonine; in State 1 and State 2. Positions G10 to T37 are enriched in low complexity. T17 is subject to Phosphothreonine; in State 2. Residue T33 is modified to Phosphothreonine; in State 1 and State 2. Y47 is a chlorophyll b binding site. 2 residues coordinate chlorophyll a: F73 and S79. Residue S103 is modified to Phosphoserine; in State 2. Chlorophyll a-binding residues include E137 and H140. 2 consecutive transmembrane segments (helical) span residues W143 to V163 and A176 to G196. The chlorophyll b site is built by S183, E199, and R202. Positions 238, 241, 243, and 255 each coordinate chlorophyll a. Residues L244 to L264 traverse the membrane as a helical segment.

This sequence belongs to the light-harvesting chlorophyll a/b-binding (LHC) protein family. In terms of assembly, the LHC complex consists of chlorophyll a-b binding proteins. It depends on Binds at least 14 chlorophylls (8 Chl-a and 6 Chl-b) and carotenoids such as lutein and neoxanthin. as a cofactor. In terms of processing, reversible phosphorylation plays a role in the State transition process and determines the affinity of LHCII for PSI and PSII.

It localises to the plastid. It is found in the chloroplast thylakoid membrane. Functionally, the light-harvesting complex (LHC) functions as a light receptor, it captures and delivers excitation energy to photosystems with which it is closely associated. CP29 facilitates the State 1 to State 2 transition, where State I is induced by excess photosystem I (PSI) light and State 2 is induced by excess photosystem II (PSII) light. The sequence is that of Chlorophyll a-b binding protein CP29 from Chlamydomonas reinhardtii (Chlamydomonas smithii).